The following is a 474-amino-acid chain: Pleckstrin homology domain-containing family S member 1 (474 aa).

Positions 20-135 constitute a PH domain; that stretch reads EVHKRDYFIK…WVSFMTPYCQ (116 aa). 3 disordered regions span residues 232 to 251, 272 to 321, and 449 to 474; these read IAGP…DQGF, STSA…DDQK, and RDLP…AAGE. A compositionally biased stretch (polar residues) spans 238-248; sequence SGDSIESNSPD. The segment covering 449–458 has biased composition (basic and acidic residues); the sequence is RDLPELERTP.

The chain is Pleckstrin homology domain-containing family S member 1 from Mus musculus (Mouse).